A 316-amino-acid chain; its full sequence is Transaldolase B (316 aa).

Lysine 131 functions as the Schiff-base intermediate with substrate in the catalytic mechanism.

The protein belongs to the transaldolase family. Type 1 subfamily. Homodimer.

The protein resides in the cytoplasm. The catalysed reaction is D-sedoheptulose 7-phosphate + D-glyceraldehyde 3-phosphate = D-erythrose 4-phosphate + beta-D-fructose 6-phosphate. The protein operates within carbohydrate degradation; pentose phosphate pathway; D-glyceraldehyde 3-phosphate and beta-D-fructose 6-phosphate from D-ribose 5-phosphate and D-xylulose 5-phosphate (non-oxidative stage): step 2/3. Transaldolase is important for the balance of metabolites in the pentose-phosphate pathway. The chain is Transaldolase B (talB) from Pasteurella multocida (strain Pm70).